We begin with the raw amino-acid sequence, 512 residues long: MSMTICSNTPGAYPEIGAYNEVDKQLESSGFSSDSSLILNKPEVRQYWSSVSSHISRSGDVFTNDKEKISSSIGEDAMDIDASPSLIEKYNSFPTRKILPEQDEFENDVEDDASSSLKEKSQGSCEIEIASEISSEILNGTSADGNSEFHDFAEPPPSQNESVALSFSQSNDLDFLNNPSGSGSSNDINRSTSSISLPRHVSLDFNVYNSLCLTNEVTASESHNVAKFHLGKENKKSLLPRWKTIEMYGEVVKKTQDIYSNFQYAQYILRVGLDTEKLHELVKELEDESNSFTVDSLKEYLVNDAKVILKKLSAVGYPDAQYLLGDAYSSGVFGKIKNRRAFLLFSAAAKRLHIESVYRTAICYECGLGVTRNAPKAVNFLTFAATKNHPAAMYKLGVYSYHGLMGLPDDILTKMDGYRWLRRATSMASSFVCGAPFELANIYMTGYKDLIISDPDYAMALYEKAAALGHTESARILEDARRSGGFVSRGHPPSAQKYHKTSHEAVAAKKLI.

Over residues 101 to 113 (EQDEFENDVEDDA) the composition is skewed to acidic residues. Disordered stretches follow at residues 101-122 (EQDEFENDVEDDASSSLKEKSQ) and 144-165 (DGNSEFHDFAEPPPSQNESVAL). 4 Sel1-like repeats span residues 318 to 353 (PDAQYLLGDAYSSGVFGKIKNRRAFLLFSAAAKRLH), 354 to 389 (IESVYRTAICYECGLGVTRNAPKAVNFLTFAATKNH), 390 to 429 (PAAMYKLGVYSYHGLMGLPDDILTKMDGYRWLRRATSMAS), and 433 to 470 (CGAPFELANIYMTGYKDLIISDPDYAMALYEKAAALGH).

It belongs to the SKT5 family.

Its subcellular location is the cytoplasm. The protein localises to the cytoplasmic granule membrane. Required for the activation of chitin synthase III (CHS3) activity during the sporulation process. The sequence is that of Protein SHC1 (SHC1) from Saccharomyces cerevisiae (strain YJM789) (Baker's yeast).